The primary structure comprises 252 residues: Chitooligosaccharide deacetylase (252 aa).

His-61 and His-125 together coordinate Mg(2+).

The protein belongs to the YdjC deacetylase family. ChbG subfamily. In terms of assembly, homodimer. Requires Mg(2+) as cofactor.

It localises to the cytoplasm. It carries out the reaction N,N'-diacetylchitobiose + H2O = N-acetyl-beta-D-glucosaminyl-(1-&gt;4)-D-glucosamine + acetate. The catalysed reaction is diacetylchitobiose-6'-phosphate + H2O = N'-monoacetylchitobiose-6'-phosphate + acetate. The protein operates within glycan degradation; chitin degradation. Functionally, involved in the degradation of chitin. ChbG is essential for growth on the acetylated chitooligosaccharides chitobiose and chitotriose but is dispensable for growth on cellobiose and chitosan dimer, the deacetylated form of chitobiose. Deacetylation of chitobiose-6-P and chitotriose-6-P is necessary for both the activation of the chb promoter by the regulatory protein ChbR and the hydrolysis of phosphorylated beta-glucosides by the phospho-beta-glucosidase ChbF. Catalyzes the removal of only one acetyl group from chitobiose-6-P to yield monoacetylchitobiose-6-P, the inducer of ChbR and the substrate of ChbF. The sequence is that of Chitooligosaccharide deacetylase from Salmonella typhi.